Here is a 537-residue protein sequence, read N- to C-terminus: MFS-type transporter qa-x (537 aa).

Residues 1-26 (MTLLALKEDRPTPKAVYNWRVYTCAA) are Cytoplasmic-facing. Residues 27–47 (IASFASCMIGYDSAFIGTTLA) traverse the membrane as a helical segment. At 48–74 (LPSFTKEFDFASYTPGALALLQSNIVS) the chain is on the extracellular side. The chain crosses the membrane as a helical span at residues 75 to 95 (VYQAGAFFGCLFAYATSYFLG). Over 96–98 (RRK) the chain is Cytoplasmic. The helical transmembrane segment at 99–119 (SLIAFSVVFIIGAAIMLAADG) threads the bilayer. The Extracellular portion of the chain corresponds to 120–131 (QGRGIDPIIAGR). Residues 132–152 (VLAGIGVGGASNMVPIYISEL) form a helical membrane-spanning segment. The Cytoplasmic portion of the chain corresponds to 153–160 (APPAVRGR). The helical transmembrane segment at 161 to 181 (LVGIYELGWQIGGLVGFWINY) threads the bilayer. At 182 to 195 (GVNTTMAPTRSQWL) the chain is on the extracellular side. Residue N184 is glycosylated (N-linked (GlcNAc...) asparagine). Residues 196–216 (IPFAVQLIPAGLLFLGSFWIP) traverse the membrane as a helical segment. Residues 217 to 285 (ESPRWLYANG…SLKQRKVQWR (69 aa)) are Cytoplasmic-facing. A helical transmembrane segment spans residues 286-306 (FFLGGMLFFWQNGSGINAINY). Over 307–327 (YSPTVFRSIGITGTDTGFLTT) the chain is Extracellular. The helical transmembrane segment at 328–349 (GIFGVVKMVLTIIWLLWLVDLV) threads the bilayer. Topologically, residues 350 to 352 (GRR) are cytoplasmic. The helical transmembrane segment at 353-373 (RILFIGAAGGSLCMWFIGAYI) threads the bilayer. Residues 374-389 (KIADPGSNKAEDAKLT) are Extracellular-facing. A helical membrane pass occupies residues 390–410 (SGGIAAIFFFYLWTAFYTPSW). At 411–435 (NGTPWVINSEMFDQNTRSLGQASAA) the chain is on the cytoplasmic side. Residues 436 to 456 (ANNWFWNFIISRFTPQMFIKM) form a helical membrane-spanning segment. Residues 457 to 458 (EY) lie on the Extracellular side of the membrane. A helical membrane pass occupies residues 459–479 (GVYFFFASLMLLSIVFIYFFL). Residues 480–537 (PETKSIPLEAMDRLFEIKPVQNANKNLMAELNFDRNPEREESSSLDDKDRVTQTENAV) lie on the Cytoplasmic side of the membrane. The segment covering 514-531 (RNPEREESSSLDDKDRVT) has biased composition (basic and acidic residues). Residues 514-537 (RNPEREESSSLDDKDRVTQTENAV) are disordered.

The protein belongs to the major facilitator superfamily. Sugar transporter (TC 2.A.1.1) family.

It is found in the membrane. Functionally, MFS-type transporter; part of the qa gene cluster that mediates the catabolism of quinic acid (QA) and as such, allows the use of QA as a sole carbon source. Involved in the upatke of QA. The qa cluster encodes 3 inducible enymes (qa-2, qa-3 and qa-4) catalyzing the first three reactions in the catabolism of quinic acid to protocatechuic acid (also known as 3,4-Dihydroxybenzoic acid). This chain is MFS-type transporter qa-x, found in Neurospora crassa (strain ATCC 24698 / 74-OR23-1A / CBS 708.71 / DSM 1257 / FGSC 987).